The chain runs to 475 residues: Amino acid permease 8 (475 aa).

Residues 1-22 are disordered; it reads MDAYNNPSAVESGDAAVKSVDD. Topologically, residues 1–31 are cytoplasmic; it reads MDAYNNPSAVESGDAAVKSVDDDGREKRTGT. 2 consecutive transmembrane segments (helical) span residues 32-52 and 53-73; these read FWTA…LSLA and WAIA…FAII. Topologically, residues 74 to 120 are cytoplasmic; sequence TYYTSTLLADCYRSPDSITGTRNYNYMGVVRSYLGGKKVQLCGVAQY. Residues 121–141 traverse the membrane as a helical segment; it reads VNLVGVTIGYTITASISLVAI. Topologically, residues 142 to 157 are extracellular; it reads GKSNCYHDKGHKAKCS. Residues 158-178 form a helical membrane-spanning segment; the sequence is VSNYPYMAAFGIVQIILSQLP. At 179-185 the chain is on the cytoplasmic side; that stretch reads NFHKLSF. A helical transmembrane segment spans residues 186–206; sequence LSIIAAVMSFSYASIGIGLAI. The Extracellular portion of the chain corresponds to 207 to 236; it reads ATVASGKIGKTELTGTVIGVDVTASEKVWK. The helical transmembrane segment at 237-257 threads the bilayer; it reads LFQAIGDIAFSYAFTTILIEI. The Cytoplasmic segment spans residues 258–276; it reads QDTLRSSPPENKVMKRASL. A helical membrane pass occupies residues 277–297; the sequence is VGVSTTTVFYILCGCIGYAAF. Over 298-314 the chain is Extracellular; the sequence is GNQAPGDFLTDFGFYEP. Residues 315–335 traverse the membrane as a helical segment; that stretch reads YWLIDFANACIALHLIGAYQV. Topologically, residues 336-378 are cytoplasmic; it reads YAQPFFQFVEENCNKKWPQSNFINKEYSSKVPLLGKCRVNLFR. The chain crosses the membrane as a helical span at residues 379–398; it reads LVWRTCYVVLTTFVAMIFPF. Topologically, residues 399–401 are extracellular; that stretch reads FNA. Residues 402-424 traverse the membrane as a helical segment; that stretch reads ILGLLGAFAFWPLTVYFPVAMHI. Over 425–441 the chain is Cytoplasmic; that stretch reads AQAKVKKYSRRWLALNL. A helical transmembrane segment spans residues 442–462; the sequence is LVLVCLIVSALAAVGSIIGLI. Residues 463–475 lie on the Extracellular side of the membrane; that stretch reads NSVKSYKPFKNLD.

Belongs to the amino acid/polyamine transporter 2 family. Amino acid/auxin permease (AAAP) (TC 2.A.18.2) subfamily. As to expression, expressed in flower buds, siliques, developing seeds and funiculi.

The protein localises to the cell membrane. In terms of biological role, amino acid-proton symporter. Stereospecific transporter with a broad specificity for glutamate, aspartate and neutral and acidic amino acids. The sequence is that of Amino acid permease 8 (AAP8) from Arabidopsis thaliana (Mouse-ear cress).